Here is a 102-residue protein sequence, read N- to C-terminus: Large ribosomal subunit protein bL21 (102 aa).

The protein belongs to the bacterial ribosomal protein bL21 family. In terms of assembly, part of the 50S ribosomal subunit. Contacts protein L20.

Functionally, this protein binds to 23S rRNA in the presence of protein L20. This Myxococcus xanthus (strain DK1622) protein is Large ribosomal subunit protein bL21.